A 254-amino-acid chain; its full sequence is Probable pectate lyase E (254 aa).

Positions 1–17 (MLQSLLLLPLFLTSAFA) are cleaved as a signal peptide. A glycan (N-linked (GlcNAc...) asparagine) is linked at Asn175. The segment at 228–254 (NNNGKEPKKKSSGPSKACEYNQPLKKC) is disordered.

Belongs to the polysaccharide lyase 3 family. Ca(2+) is required as a cofactor.

It localises to the secreted. It carries out the reaction Eliminative cleavage of (1-&gt;4)-alpha-D-galacturonan to give oligosaccharides with 4-deoxy-alpha-D-galact-4-enuronosyl groups at their non-reducing ends.. Functionally, pectinolytic enzyme consist of four classes of enzymes: pectin lyase, polygalacturonase, pectin methylesterase and rhamnogalacturonase. Among pectinolytic enzymes, pectin lyase is the most important in depolymerization of pectin, since it cleaves internal glycosidic bonds of highly methylated pectins. Favors pectate, the anion, over pectin, the methyl ester. This is Probable pectate lyase E (plyE) from Aspergillus clavatus (strain ATCC 1007 / CBS 513.65 / DSM 816 / NCTC 3887 / NRRL 1 / QM 1276 / 107).